A 442-amino-acid polypeptide reads, in one-letter code: MRKKELFDFTNITPKLFTELRVADKTVLQSFNFDEKNHQIYTTQVASGLGKDNTQSYRITRLSLEGLQLDSMLLKHGGHGTNIGIENRNGTIYIWSLYDKPNETDKSELVCFPYKAGATLDENSKELQRFSNMPFDHRVTPALDMKNRQLAIRQYDTKNNNNKQWVTIFNLDDAIANKNNPLYTINIPDELHYLQGFFLDDGYLYWYTGDTNSKSYPNLITVFDSDNKIVLQKEITVGKDLSTRYENNFREPEGICMYTNPETGAKSLMVGITSGKEGNRISRIYAYHSYENFMNHVPMLRSPLLKTVGHQDTPPERFQPFIQTFILEYNAQNKKWMVPTSGYLPSYTSNLVRNITINADGNLQVTLNERYISLLHQSIEGDFRLKQKDIRMGSWYFAGGEKSNVLEIGFMKGSTKIRPDDAAISNASRMSIFMIVADKIEV.

Unknown. Might be involved in poly(glycerol phosphate) teichoic acid biosynthesis. The sequence is that of Putative major teichoic acid biosynthesis protein C (tagC) from Bacillus subtilis (strain 168).